A 98-amino-acid polypeptide reads, in one-letter code: Small ribosomal subunit protein bS18 (98 aa).

Belongs to the bacterial ribosomal protein bS18 family. As to quaternary structure, part of the 30S ribosomal subunit. Forms a tight heterodimer with protein bS6.

In terms of biological role, binds as a heterodimer with protein bS6 to the central domain of the 16S rRNA, where it helps stabilize the platform of the 30S subunit. This chain is Small ribosomal subunit protein bS18, found in Flavobacterium johnsoniae (strain ATCC 17061 / DSM 2064 / JCM 8514 / BCRC 14874 / CCUG 350202 / NBRC 14942 / NCIMB 11054 / UW101) (Cytophaga johnsonae).